The primary structure comprises 198 residues: Probable GTP-binding protein EngB (198 aa).

Positions 27 to 198 constitute an EngB-type G domain; that stretch reads DLPEVALAGR…ESWDTILSEL (172 aa). GTP contacts are provided by residues 35–42, 62–66, 80–83, 147–150, and 179–181; these read GRSNVGKS, GKTQL, DVPG, TKAD, and FSS. Positions 42 and 64 each coordinate Mg(2+).

This sequence belongs to the TRAFAC class TrmE-Era-EngA-EngB-Septin-like GTPase superfamily. EngB GTPase family. Mg(2+) is required as a cofactor.

Necessary for normal cell division and for the maintenance of normal septation. The chain is Probable GTP-binding protein EngB from Streptococcus agalactiae serotype III (strain NEM316).